We begin with the raw amino-acid sequence, 266 residues long: Norfluorocurarine synthase 2 (266 aa).

The AB hydrolase-1 domain occupies 11 to 121; the sequence is HFVLVHGAGH…VMPDSTHPPN (111 aa). Residues S86, D216, and H244 contribute to the active site.

This sequence belongs to the AB hydrolase superfamily. In terms of assembly, homodimer.

It carries out the reaction 17-dehydropreakuammicine + H2O = norfluorocurarine + methanol + CO2. It functions in the pathway alkaloid biosynthesis. Its function is as follows. Hydrolase involved in the biosynthesis of curare monoterpene indole alkaloids (MIAs), natural products such as diaboline, a pharmacologically active compound used to regulate blood pressure. Curare alkaloids act as animal glycine receptor antagonists. Catalyzes the conversion of dehydropreakuammicine to norfluorocurarine. The sequence is that of Norfluorocurarine synthase 2 from Strychnos sp.